A 596-amino-acid chain; its full sequence is UvrABC system protein C (596 aa).

One can recognise a GIY-YIG domain in the interval 14–91 (DQPGCYLMKD…IKLHDPKYNV (78 aa)). The region spanning 196 to 231 (EAVKKELEVKMLAAAENLEFERAKEFRDQIAHIDTV) is the UVR domain.

It belongs to the UvrC family. In terms of assembly, interacts with UvrB in an incision complex.

The protein localises to the cytoplasm. Functionally, the UvrABC repair system catalyzes the recognition and processing of DNA lesions. UvrC both incises the 5' and 3' sides of the lesion. The N-terminal half is responsible for the 3' incision and the C-terminal half is responsible for the 5' incision. In Lysinibacillus sphaericus (strain C3-41), this protein is UvrABC system protein C.